Here is a 589-residue protein sequence, read N- to C-terminus: Ufm1-specific protease (589 aa).

A disordered region spans residues 1–22 (MTNSQTVSLIGPTQMAPQSTPP). Active-site residues include Cys-421, Asp-545, and His-547.

Belongs to the peptidase C78 family. As to quaternary structure, interacts with odr-4. In terms of tissue distribution, expressed in head and tail neurons. Expressed in the amphid head neurons ADL, ASI, ASH, ASJ, ASG, ADF, ASK, AWA, AWB, AWC, and in two tail neurons, the phasmid tail neurons PHA and PHB.

The protein resides in the endoplasmic reticulum membrane. It is found in the cytoplasm. Its subcellular location is the perinuclear region. Functionally, thiol protease which recognizes and hydrolyzes the peptide bond at the C-terminal Gly of ufm-1, a ubiquitin-like modifier protein bound to a number of target proteins. Required, with oct-4, for the localization of a subset of 7 transmembrane domain odorant receptors, including odr-10, to the cilia of olfactory neurons AWA and AWC. Operates in aggregation behavior, and responses to oxygen levels. In Caenorhabditis elegans, this protein is Ufm1-specific protease.